The primary structure comprises 256 residues: Small ribosomal subunit protein uS2 (256 aa).

Belongs to the universal ribosomal protein uS2 family.

The chain is Small ribosomal subunit protein uS2 from Acidiphilium cryptum (strain JF-5).